Consider the following 1914-residue polypeptide: MADGKGDAAAVAGAGAEAPAVAGAGDGVETESMVRGHRPVSPAPGASGLRPCLWQLETELREQEVSEVSSLNYCRSFCQTLLQYASNKNASEHIVYLLEVYRLAIQSFASARPYLTTECEDVLLVLGRLVLSCFELLLSVSESELPCEVWLPFLQSLQESHDALLEFGNNNLQILVHVTKEGVWKNPVLLKILSQQPVETEEVNKLIAQEGPSFLQMRIKHLLKSNCIPQATALSKLCAESKEISNVSSFQQAYITCLCSMLPNEDAIKEIAKVDCKEVLDIICNLESEGQDNTAFVLCTTYLTQQLQTASVYCSWELTLFWSKLQRRIDPSLDTFLERCRQFGVIAKTQQHLFCLIRVIQTEAQDAGLGVSILLCVRALQLRSSEDEEMKASVCKTIACLLPEDLEVRRACQLTEFLIEPSLDGFNMLEELYLQPDQKFDEENAPVPNSLRCELLLALKAHWPFDPEFWDWKTLKRHCHQLLGQEASDSDDDLSGYEMSINDTDVLESFLSDYDEGKEDKQYRRRDLTDQHKEKRDKKPIGSSERYQRWLQYKFFCLLCKRECIEARILHHSKMHMEDGIYTCPVCIKKFKRKEMFVPHVMEHVKMPPSRRDRSKKKLLLKGSQKGICPKSPSAIPEQNHSLNDQAKGESHEYVTFSKLEDCHLQDRDLYPCPGTDCSRVFKQFKYLSVHLKAEHQNNDENAKHYLDMKNRREKCTYCRRHFMSAFHLREHEQVHCGPQPYMCVSIDCYARFGSVNELLNHKQKHDDLRYKCELNGCNIVFSDLGQLYHHEAQHFRDASYTCNFLGCKKFYYSKIEYQNHLSMHNVENSNGDIKKSVKLEESATGEKQDCINQPHLLNQTDKSHLPEDLFCAESANSQIDTETAENLKENSDSNSSDQLSHSSSASMNEELIDTLDHSETMQDVLLSNEKVFGPSSLKEKCSSMAVCFDGTKFTCGFDGCGSTYKNARGMQKHLRKVHPYHFKPKKIKTKDLFPSLGNEHNQTTEKLDAEPKPCSDTNSDSPDEGLDHNIHIKCKREHQGYSSESSICASKRPCTEDTMLELLLRLKHLSLKNSITHGSFSGSLQGYPSSGAKSLQSVSSISDLNFQNQDENMPSQYLAQLAAKPFFCELQGCKYEFVTREALLMHYLKKHNYSKEKVLQLTMFQHRYSPFQCHICQRSFTRKTHLRIHYKNKHQIGSDRATHKLLDNEKCDHEGPCSVDRLKGDCSAELGGDPSSNSEKPHCHPKKDECSSETDLESSCEETESKTSDISSPIGSHREEQEGREGRGSRRTVAKGNLCYILNKYHKPFHCIHKTCNSSFTNLKGLIRHYRTVHQYNKEQLCLEKDKARTKRELVKCKKIFACKYKECNKRFLCSKALAKHCSDSHNLDHIEEPKVLSEAGSAARFSCNQPQCPAVFYTFNKLKHHLMEQHNIEGEIHSDYEIHCDLNGCGQIFTHRSNYSQHVYYRHKDYYDDLFRSQKVANERLLRSEKVCQTADTQGHEHQTTRRSFNAKSKKCGLIKEKKAPISFKTRAEALHMCVEHSEHTQYPCMVQGCLSVVKLESSIVRHYKRTHQMSSAYLEQQMENLVVCVKYGTKIKEEPPSEADPCIKKEENRSCESERTEHSHSPGDSSAPIQNTDCCHSSERDGGQKGCIESSSVFDADTLLYRGTLKCNHSSKTTSLEQCNIVQPPPPCKIENSIPNPNGTESGTYFTSFQLPLPRIKESETRQHSSGQENTVKNPTHVPKENFRKHSQPRSFDLKTYKPMGFESSFLKFIQESEEKEDDFDDWEPSEHLTLSNSSQSSNDLTGNVVANNMVNDSEPEVDIPHSSSDSTIHENLTAIPPLIVAETTTVPSLENLRVVLDKALTDCGELALKQLHYLRPVVVLERSKFSTPILDLFPTKKTDELCVGSS.

S41 is subject to Phosphoserine. Residues 521-540 (KQYRRRDLTDQHKEKRDKKP) show a composition bias toward basic and acidic residues. The disordered stretch occupies residues 521 to 541 (KQYRRRDLTDQHKEKRDKKPI). Residues 582–604 (YTCPVCIKKFKRKEMFVPHVMEH) form a C2H2-type 1 zinc finger. Residue K622 forms a Glycyl lysine isopeptide (Lys-Gly) (interchain with G-Cter in SUMO2) linkage. Phosphoserine occurs at positions 632 and 634. C2H2-type zinc fingers lie at residues 671–696 (YPCP…KAEH), 714–736 (EKCT…EQVH), 742–766 (YMCV…KQKH), 771–795 (YKCE…EAQH), and 801–825 (YTCN…LSMH). K839 is covalently cross-linked (Glycyl lysine isopeptide (Lys-Gly) (interchain with G-Cter in SUMO2)). The interval 882 to 907 (TETAENLKENSDSNSSDQLSHSSSAS) is disordered. Positions 893-907 (DSNSSDQLSHSSSAS) are enriched in low complexity. The segment at 954 to 979 (FTCGFDGCGSTYKNARGMQKHLRKVH) adopts a C2H2-type 7 zinc-finger fold. Residues 993-1028 (LFPSLGNEHNQTTEKLDAEPKPCSDTNSDSPDEGLD) form a disordered region. The segment covering 1003–1014 (QTTEKLDAEPKP) has biased composition (basic and acidic residues). C2H2-type zinc fingers lie at residues 1127–1152 (FFCE…LKKH) and 1172–1195 (FQCH…KNKH). A disordered region spans residues 1231-1290 (LGGDPSSNSEKPHCHPKKDECSSETDLESSCEETESKTSDISSPIGSHREEQEGREGRGS). The segment covering 1240–1251 (EKPHCHPKKDEC) has biased composition (basic and acidic residues). Acidic residues predominate over residues 1252–1263 (SSETDLESSCEE). Positions 1277–1289 (SHREEQEGREGRG) are enriched in basic and acidic residues. 5 C2H2-type zinc fingers span residues 1310-1335 (FHCI…RTVH), 1362-1387 (FACK…SDSH), 1407-1432 (FSCN…MEQH), 1444-1469 (IHCD…YYRH), and 1549-1574 (YPCM…KRTH). A Glycyl lysine isopeptide (Lys-Gly) (interchain with G-Cter in SUMO2) cross-link involves residue K1423. Glycyl lysine isopeptide (Lys-Gly) (interchain with G-Cter in SUMO2) cross-links involve residues K1599 and K1611. The segment at 1620–1654 (SERTEHSHSPGDSSAPIQNTDCCHSSERDGGQKGC) is disordered. A compositionally biased stretch (polar residues) spans 1629-1642 (PGDSSAPIQNTDCC). K1696 is covalently cross-linked (Glycyl lysine isopeptide (Lys-Gly) (interchain with G-Cter in SUMO2)). A disordered region spans residues 1725-1757 (ESETRQHSSGQENTVKNPTHVPKENFRKHSQPR). Polar residues predominate over residues 1731–1741 (HSSGQENTVKN). Residue K1762 forms a Glycyl lysine isopeptide (Lys-Gly) (interchain with G-Cter in SUMO2) linkage. The tract at residues 1783–1807 (KEDDFDDWEPSEHLTLSNSSQSSND) is disordered. Residues 1796 to 1807 (LTLSNSSQSSND) show a composition bias toward polar residues.

This sequence belongs to the krueppel C2H2-type zinc-finger protein family. In terms of assembly, interacts with RIT1 and RIT2. As to expression, widely expressed in fetal and adult tissues.

Its subcellular location is the nucleus. Its function is as follows. May be involved in transcriptional regulation. The chain is Zinc finger protein Rlf (RLF) from Homo sapiens (Human).